Reading from the N-terminus, the 340-residue chain is Phenylalanine--tRNA ligase alpha subunit (340 aa).

A Mg(2+)-binding site is contributed by Glu-254.

Belongs to the class-II aminoacyl-tRNA synthetase family. Phe-tRNA synthetase alpha subunit type 1 subfamily. As to quaternary structure, tetramer of two alpha and two beta subunits. The cofactor is Mg(2+).

Its subcellular location is the cytoplasm. The enzyme catalyses tRNA(Phe) + L-phenylalanine + ATP = L-phenylalanyl-tRNA(Phe) + AMP + diphosphate + H(+). The polypeptide is Phenylalanine--tRNA ligase alpha subunit (Caldicellulosiruptor bescii (strain ATCC BAA-1888 / DSM 6725 / KCTC 15123 / Z-1320) (Anaerocellum thermophilum)).